Consider the following 228-residue polypeptide: Lipoprotein-releasing system ATP-binding protein LolD (228 aa).

An ABC transporter domain is found at 6–228 (IKCLNVVKGY…EAGVLNKQGQ (223 aa)). Residue 42 to 49 (GASGSGKS) participates in ATP binding.

The protein belongs to the ABC transporter superfamily. Lipoprotein translocase (TC 3.A.1.125) family. The complex is composed of two ATP-binding proteins (LolD) and two transmembrane proteins (LolC and LolE).

The protein resides in the cell inner membrane. Its function is as follows. Part of the ABC transporter complex LolCDE involved in the translocation of mature outer membrane-directed lipoproteins, from the inner membrane to the periplasmic chaperone, LolA. Responsible for the formation of the LolA-lipoprotein complex in an ATP-dependent manner. The protein is Lipoprotein-releasing system ATP-binding protein LolD of Saccharophagus degradans (strain 2-40 / ATCC 43961 / DSM 17024).